The chain runs to 58 residues: Potassium channel toxin alpha-KTx 26.2 (58 aa).

Positions 1–19 are cleaved as a signal peptide; that stretch reads MKTIFVVILVLFVLSAMLA. Disulfide bonds link C31-C49, C35-C54, and C39-C56.

It belongs to the short scorpion toxin superfamily. Potassium channel inhibitor family. Alpha-KTx 26 subfamily. In terms of tissue distribution, expressed by the venom gland.

The protein localises to the secreted. Its function is as follows. Inhibits voltage-gated potassium channels. The sequence is that of Potassium channel toxin alpha-KTx 26.2 from Lychas mucronatus (Chinese swimming scorpion).